The primary structure comprises 452 residues: Glutamate--tRNA ligase 2 (452 aa).

The 'HIGH' region signature appears at 8-18 (PSPTGRLHVGN). Residues 246–250 (KLSKR) carry the 'KMSKS' region motif. ATP is bound at residue K249.

This sequence belongs to the class-I aminoacyl-tRNA synthetase family. Glutamate--tRNA ligase type 1 subfamily. In terms of assembly, monomer.

Its subcellular location is the cytoplasm. It catalyses the reaction tRNA(Glu) + L-glutamate + ATP = L-glutamyl-tRNA(Glu) + AMP + diphosphate. Its function is as follows. Catalyzes the attachment of glutamate to tRNA(Glu) in a two-step reaction: glutamate is first activated by ATP to form Glu-AMP and then transferred to the acceptor end of tRNA(Glu). This is Glutamate--tRNA ligase 2 from Erythrobacter litoralis (strain HTCC2594).